Consider the following 187-residue polypeptide: Elongation factor P (187 aa).

It belongs to the elongation factor P family.

Its subcellular location is the cytoplasm. The protein operates within protein biosynthesis; polypeptide chain elongation. Involved in peptide bond synthesis. Stimulates efficient translation and peptide-bond synthesis on native or reconstituted 70S ribosomes in vitro. Probably functions indirectly by altering the affinity of the ribosome for aminoacyl-tRNA, thus increasing their reactivity as acceptors for peptidyl transferase. This is Elongation factor P from Magnetococcus marinus (strain ATCC BAA-1437 / JCM 17883 / MC-1).